A 417-amino-acid polypeptide reads, in one-letter code: NADH-quinone oxidoreductase subunit D (417 aa).

This sequence belongs to the complex I 49 kDa subunit family. In terms of assembly, NDH-1 is composed of 14 different subunits. Subunits NuoB, C, D, E, F, and G constitute the peripheral sector of the complex.

The protein localises to the cell inner membrane. The catalysed reaction is a quinone + NADH + 5 H(+)(in) = a quinol + NAD(+) + 4 H(+)(out). In terms of biological role, NDH-1 shuttles electrons from NADH, via FMN and iron-sulfur (Fe-S) centers, to quinones in the respiratory chain. The immediate electron acceptor for the enzyme in this species is believed to be ubiquinone. Couples the redox reaction to proton translocation (for every two electrons transferred, four hydrogen ions are translocated across the cytoplasmic membrane), and thus conserves the redox energy in a proton gradient. This is NADH-quinone oxidoreductase subunit D from Paraburkholderia phymatum (strain DSM 17167 / CIP 108236 / LMG 21445 / STM815) (Burkholderia phymatum).